The primary structure comprises 371 residues: Cytochrome b (371 aa).

4 helical membrane passes run 25–45, 69–90, 105–125, and 170–190; these read FGSMLLACSSMQVLTGFFLAV, WMMQNLHAIGASMFFICIYIHI, WLSGTTLLIMLMATAXXXXXX, and XXXXXXILPFGIISLSSLHIM. Residues histidine 75 and histidine 89 each coordinate heme b. Residues residue 174 and histidine 188 each coordinate heme b. Histidine 193 serves as a coordination point for a ubiquinone. Helical transmembrane passes span 218 to 238, 280 to 300, 312 to 332, and 339 to 358; these read YKDLLMLSLMVLTLLMTVSFL, LGGALALAMSIMILLTTPFTH, IMQLMFWTLVATFVVITWAAT, and FTMISQVASTMYFLFFITNP.

This sequence belongs to the cytochrome b family. As to quaternary structure, the cytochrome bc1 complex contains 3 respiratory subunits (MT-CYB, CYC1 and UQCRFS1), 2 core proteins (UQCRC1 and UQCRC2) and probably 6 low-molecular weight proteins. Heme b serves as cofactor.

Its subcellular location is the mitochondrion inner membrane. Its function is as follows. Component of the ubiquinol-cytochrome c reductase complex (complex III or cytochrome b-c1 complex) that is part of the mitochondrial respiratory chain. The b-c1 complex mediates electron transfer from ubiquinol to cytochrome c. Contributes to the generation of a proton gradient across the mitochondrial membrane that is then used for ATP synthesis. This Eryx jaculus (Javelin sand boa) protein is Cytochrome b (MT-CYB).